Here is a 467-residue protein sequence, read N- to C-terminus: MELNMNQYDNIESNDSPPTPSSPGEEGNVEKKEKKSGRRKINIEFIGDKSRRHITFSKRKSGIMKKAYELSTLTGTQVLLIVASETGHVYTFATPKLQPLITKQEGKTLIQACLNTPDVPPVSKDDGNNNNGNNSNNNNNSNNNNSSNNNNNGNNNNGNTNNNNGNNNNSNNNNSGNNNNNNNNNSYNNNNNNNNNNNNNNNNNNCKEEQNMNIPNERKSKNNINNNNNNQNNNQNNNQNNNNLTQPIQNLQLPLQQNIIAQQQQQLNQQAALQQQMTQQIDQKLYNLQLQQQQMQQQQQIQNISGGSGNNSNGYINGNGMNGNNNNNNNSNNIPEYGQVIIQSYRGSNSGGNNSSNNTSTNTNTNTNTNTNNNNNNSNSSNGNNSNNNSNNILPQNLTTPSPIISQPLPSIPSPSSSSSNIGNSGYSSPFSTSFSYGGYQQPFSRNYPLQSNIATNSTVSKAPSDL.

Residues 1–15 are compositionally biased toward polar residues; sequence MELNMNQYDNIESND. 3 disordered regions span residues 1–38, 115–245, and 301–467; these read MELNMNQYDNIESNDSPPTPSSPGEEGNVEKKEKKSGR, NTPD…NNLT, and IQNI…PSDL. In terms of domain architecture, MADS-box spans 36–96; the sequence is SGRRKINIEF…GHVYTFATPK (61 aa). Low complexity predominate over residues 128–205; the sequence is NNNNGNNSNN…NNNNNNNNNN (78 aa). Residues 206–220 are compositionally biased toward basic and acidic residues; sequence CKEEQNMNIPNERKS. Composition is skewed to low complexity over residues 222–245, 301–334, 347–392, and 401–440; these read NNINNNNNNQNNNQNNNQNNNNLT, IQNISGGSGNNSNGYINGNGMNGNNNNNNNSNNI, GSNS…NSNN, and PSPIISQPLPSIPSPSSSSSNIGNSGYSSPFSTSFSYGGY. Residues 442–467 show a composition bias toward polar residues; that stretch reads QPFSRNYPLQSNIATNSTVSKAPSDL.

Its subcellular location is the nucleus. The chain is Serum response factor homolog B (srfB) from Dictyostelium discoideum (Social amoeba).